The sequence spans 548 residues: Chaperonin GroEL (548 aa).

ATP-binding positions include 30–33 (TLGP), K51, 87–91 (DGTTT), G415, 479–481 (NAA), and D495.

This sequence belongs to the chaperonin (HSP60) family. As to quaternary structure, forms a cylinder of 14 subunits composed of two heptameric rings stacked back-to-back. Interacts with the co-chaperonin GroES.

It is found in the cytoplasm. It catalyses the reaction ATP + H2O + a folded polypeptide = ADP + phosphate + an unfolded polypeptide.. In terms of biological role, together with its co-chaperonin GroES, plays an essential role in assisting protein folding. The GroEL-GroES system forms a nano-cage that allows encapsulation of the non-native substrate proteins and provides a physical environment optimized to promote and accelerate protein folding. The chain is Chaperonin GroEL from Oleidesulfovibrio alaskensis (strain ATCC BAA-1058 / DSM 17464 / G20) (Desulfovibrio alaskensis).